The sequence spans 380 residues: Chaperone protein DnaJ (380 aa).

The 66-residue stretch at 5 to 70 (DFYETLGVSK…QKRAAYDRFG (66 aa)) folds into the J domain. A CR-type zinc finger spans residues 141–219 (GKTAQIRVPT…CHGQGRVTEE (79 aa)). The Zn(2+) site is built by Cys-154, Cys-157, Cys-171, Cys-174, Cys-193, Cys-196, Cys-207, and Cys-210. CXXCXGXG motif repeat units follow at residues 154 to 161 (CEVCSGSG), 171 to 178 (CATCQGSG), 193 to 200 (CPTCQGRG), and 207 to 214 (CGKCHGQG).

The protein belongs to the DnaJ family. Homodimer. Zn(2+) serves as cofactor.

It is found in the cytoplasm. In terms of biological role, participates actively in the response to hyperosmotic and heat shock by preventing the aggregation of stress-denatured proteins and by disaggregating proteins, also in an autonomous, DnaK-independent fashion. Unfolded proteins bind initially to DnaJ; upon interaction with the DnaJ-bound protein, DnaK hydrolyzes its bound ATP, resulting in the formation of a stable complex. GrpE releases ADP from DnaK; ATP binding to DnaK triggers the release of the substrate protein, thus completing the reaction cycle. Several rounds of ATP-dependent interactions between DnaJ, DnaK and GrpE are required for fully efficient folding. Also involved, together with DnaK and GrpE, in the DNA replication of plasmids through activation of initiation proteins. The polypeptide is Chaperone protein DnaJ (Allorhizobium ampelinum (strain ATCC BAA-846 / DSM 112012 / S4) (Agrobacterium vitis (strain S4))).